Here is a 1060-residue protein sequence, read N- to C-terminus: DNA-directed RNA polymerase subunit beta (1060 aa).

This sequence belongs to the RNA polymerase beta chain family. As to quaternary structure, in plastids the minimal PEP RNA polymerase catalytic core is composed of four subunits: alpha, beta, beta', and beta''. When a (nuclear-encoded) sigma factor is associated with the core the holoenzyme is formed, which can initiate transcription.

It is found in the plastid. The protein localises to the chloroplast. It catalyses the reaction RNA(n) + a ribonucleoside 5'-triphosphate = RNA(n+1) + diphosphate. Its function is as follows. DNA-dependent RNA polymerase catalyzes the transcription of DNA into RNA using the four ribonucleoside triphosphates as substrates. This Helianthus annuus (Common sunflower) protein is DNA-directed RNA polymerase subunit beta.